The sequence spans 186 residues: Ribosome-recycling factor (186 aa).

The protein belongs to the RRF family.

The protein resides in the cytoplasm. Responsible for the release of ribosomes from messenger RNA at the termination of protein biosynthesis. May increase the efficiency of translation by recycling ribosomes from one round of translation to another. In Ralstonia pickettii (strain 12J), this protein is Ribosome-recycling factor.